Reading from the N-terminus, the 741-residue chain is MAPQKHGGGGGGGSGPSAGSGGGGFGGSAAAVAAAASGGKSGGGGCGGGGSYSASSSSAAAAAAAAGAAVLPVKKPKMEHVQADHELFLQAFEKPTQIYRFLRTRNLIAPIFLHRTLTYMSHRNSRTSIKRKTFKVDDMLSKVEKMKGEQESHSLSAHLQLTFTGFFHKNDKPSQNSENEQNSVTLEVLLVKVCHKKRKDVSCPIRQVPTGKKQVPLNPDLNQTKPGNFPSLAVSSNEFEPSNSHMVKSYSLLFRVTRPGRREFNGMINGETNENIDVSEELPARRKRNREDGEKTFVAQMTVFDKNRRLQLLDGEYEVAMQEMEECPISKKRATWETILDGKRLPPFETFSQGPTLQFTLRWTGETNDKSTAPVAKPLATRNSESLHQENKPGSVKPAQTIAVKETLTTELQTRKEKDNSNESRQKLRIFYQFLYNNNTRQQTEARDDLHCPWCTLNCRKLYSLLKHLKLCHSRFIFNYVYHPKGARIDVSINECYDGSYAGNPQDIHRQPGFAFSRNGPVKRTPITHILVCRPKRTKASMSEFLESEDGEVEQQRTYSSGHNRLYFHSDTCLPLRPQEMEVDSEDEKDPEWLREKTITQIEEFSDVNEGEKEVMKLWNLHVMKHGFIADNQMNHACMLFVENYGQKIIKKNLCRNFMLHLVSMHDFNLISIMSIDKAVTKLREMQQKLEKGESATPSNEEIAEEQNGTANGFSETNSKEKALETDGVSGVPKQSKKQKL.

The interval 1 to 21 (MAPQKHGGGGGGGSGPSAGSG) is disordered. Ser20 is modified (phosphoserine). Glycyl lysine isopeptide (Lys-Gly) (interchain with G-Cter in SUMO) cross-links involve residues Lys74 and Lys75. Lys77 is covalently cross-linked (Glycyl lysine isopeptide (Lys-Gly) (interchain with G-Cter in SUMO); alternate). Lys77 is covalently cross-linked (Glycyl lysine isopeptide (Lys-Gly) (interchain with G-Cter in SUMO2); alternate). The interval 81 to 108 (VQADHELFLQAFEKPTQIYRFLRTRNLI) is interaction with JARID2 and EPOP. Positions 148–365 (GEQESHSLSA…TLQFTLRWTG (218 aa)) are interaction with AEBP2 and PHF19. Glycyl lysine isopeptide (Lys-Gly) (interchain with G-Cter in SUMO2) cross-links involve residues Lys225 and Lys392. The segment at 450-473 (LHCPWCTLNCRKLYSLLKHLKLCH) adopts a C2H2-type zinc-finger fold. Residues Ser543, Ser548, and Ser585 each carry the phosphoserine modification. The interval 565 to 641 (RLYFHSDTCL…NQMNHACMLF (77 aa)) is VEFS-box. Residues 689 to 741 (KLEKGESATPSNEEIAEEQNGTANGFSETNSKEKALETDGVSGVPKQSKKQKL) form a disordered region. Residues 707-717 (QNGTANGFSET) show a composition bias toward polar residues.

This sequence belongs to the VEFS (VRN2-EMF2-FIS2-SU(Z)12) family. Component of the PRC2 complex, which consists of the core subunits EED, EZH1 or EZH2, SUZ12, and RBBP4, and various combinations of accessory subunits including AEBP2, JARID2, PHF19, MTF2 and EPOP. Within the complex, interacts (via C2H2 zinc finger domain) with JARID2 and EPOP; JARID2 and EPOP compete for SUZ12 binding. Also interacts with AEBP2 and PHF19. Forms a monomeric PRC2.2 (class 2) complex consisting of at least SUZ12, RBBP4, AEBP2 and JARID2. Forms a dimeric PRC2.1 (class 1, PRC-PCL) complex consisting of at least SUZ12, RBBP4, and PHF19 or MTF2; PHF19 and MTF2 stabilize the dimeric structure which enhances PRC2 interaction with chromatin. The minimum components required for methyltransferase activity of the PRC2/EZH2 complex are EED, EZH2 and SUZ12. The PRC2 complex may also interact with DNMT1, DNMT3A, DNMT3B and PHF1 via the EZH2 subunit and with SIRT1 via the SUZ12 subunit. Interacts with WDR77. Interacts with histone H1. Interacts with CDYL. Interacts with BMAL1. Interacts with EZHIP (via C-terminal region). Interacts with ARMC12. Interacts with DDX18; this interaction inhibits the PRC2 complex. Sumoylated, probably by PIAS2. In terms of tissue distribution, expressed in embryonic stem cells.

The protein resides in the nucleus. Its subcellular location is the chromosome. Its function is as follows. Polycomb group (PcG) protein. Component of the PRC2/EED-EZH2 complex, which methylates 'Lys-9' (H3K9me) and 'Lys-27' (H3K27me) of histone H3, leading to transcriptional repression of the affected target gene. The PRC2/EED-EZH2 complex may also serve as a recruiting platform for DNA methyltransferases, thereby linking two epigenetic repression systems. Genes repressed by the PRC2/EED-EZH2 complex include HOXA7, HOXB6 and HOXC8. In Mus musculus (Mouse), this protein is Polycomb protein Suz12 (Suz12).